Here is a 131-residue protein sequence, read N- to C-terminus: Small ribosomal subunit protein uS11 (131 aa).

The protein belongs to the universal ribosomal protein uS11 family. Part of the 30S ribosomal subunit. Interacts with proteins S7 and S18. Binds to IF-3.

Located on the platform of the 30S subunit, it bridges several disparate RNA helices of the 16S rRNA. Forms part of the Shine-Dalgarno cleft in the 70S ribosome. The protein is Small ribosomal subunit protein uS11 of Helicobacter pylori (strain G27).